The chain runs to 268 residues: Ribosomal RNA small subunit methyltransferase A (268 aa).

Positions 18, 20, 45, 66, 91, and 112 each coordinate S-adenosyl-L-methionine.

This sequence belongs to the class I-like SAM-binding methyltransferase superfamily. rRNA adenine N(6)-methyltransferase family. RsmA subfamily.

It localises to the cytoplasm. It catalyses the reaction adenosine(1518)/adenosine(1519) in 16S rRNA + 4 S-adenosyl-L-methionine = N(6)-dimethyladenosine(1518)/N(6)-dimethyladenosine(1519) in 16S rRNA + 4 S-adenosyl-L-homocysteine + 4 H(+). In terms of biological role, specifically dimethylates two adjacent adenosines (A1518 and A1519) in the loop of a conserved hairpin near the 3'-end of 16S rRNA in the 30S particle. May play a critical role in biogenesis of 30S subunits. The polypeptide is Ribosomal RNA small subunit methyltransferase A (Shewanella baltica (strain OS185)).